A 207-amino-acid polypeptide reads, in one-letter code: Protein phosphatase inhibitor 2 (207 aa).

3 disordered regions span residues Met-1–Ser-44, Leu-65–Pro-97, and Glu-110–Arg-146. Ala-2 bears the N-acetylalanine mark. Residues Lys-12 to Asn-17 are required for binding PPP1CC. Residues Ser-19–Thr-28 show a composition bias toward low complexity. The segment covering Ser-35–Ser-44 has biased composition (basic and acidic residues). Residues Lys-43–Thr-55 are required for binding PPP1CC. A Phosphoserine; by ATM modification is found at Ser-44. Thr-73 is modified (phosphothreonine; by GSK3). Residues Ala-80–Thr-91 show a composition bias toward acidic residues. Phosphoserine occurs at positions 87 and 89. Residues Thr-92 and Thr-96 each carry the phosphothreonine modification. The segment covering Leu-112–Glu-122 has biased composition (basic and acidic residues). Phosphoserine occurs at positions 123, 124, 129, and 132. The segment covering Ser-123–Ser-132 has biased composition (acidic residues). Residues Pro-133–Lys-145 are compositionally biased toward basic and acidic residues. Positions His-149–Glu-152 are required for binding PPP1CC catalytic center, displacing metal ions and inhibition of PPP1CC catalytic activity. The segment at Lys-165–Ser-207 is disordered. Acidic residues predominate over residues Asn-168 to Ser-177. Positions Met-187–Ser-207 are enriched in polar residues.

Belongs to the protein phosphatase inhibitor 2 family. In terms of assembly, heterodimer with PP1. In terms of processing, phosphorylation on Ser-44 by ATM activates PP1 by dissociating the PP1-PPP1R2 complex. Phosphorylation on Thr-73 by GSK3 activates PP1 by dissociating the PP1-PPP1R2 complex.

Functionally, inhibitor of protein-phosphatase 1. This Bos taurus (Bovine) protein is Protein phosphatase inhibitor 2 (PPP1R2).